The primary structure comprises 246 residues: YjeF N-terminal domain-containing 3 (246 aa).

Residues 24–234 form the YjeF N-terminal domain; the sequence is VATVETELLR…DIQKKYELNL (211 aa).

In terms of assembly, interacts with apoa1a. Binds to high-density lipoprotein.

Accelerates cholesterol efflux from endothelial cells to high-density lipoprotein (HDL) and thereby regulates angiogenesis. Orchestrates hematopoietic stem and progenitor cell emergence from the hemogenic endothelium, a type of specialized endothelium manifesting hematopoietic potential. YJEFN3-mediated cholesterol efflux activates endothelial SREBF2, the master transcription factor for cholesterol biosynthesis, which in turn transactivates NOTCH and promotes hematopoietic stem and progenitor cell emergence. The sequence is that of YjeF N-terminal domain-containing 3 from Danio rerio (Zebrafish).